Reading from the N-terminus, the 133-residue chain is Snaclec echicetin subunit alpha (133 aa).

Disulfide bonds link C4–C15, C31–C127, and C102–C119. The C-type lectin domain maps to 11–128; the sequence is YEGHCYQLFR…CEFKFPFVCK (118 aa).

The protein belongs to the snaclec family. Heterodimer of subunits alpha and beta; disulfide-linked. Forms an active complex with the pentameric immunoglobuline Mkappa (IgMkappa). As to expression, expressed by the venom gland.

The protein localises to the secreted. Its function is as follows. Echicetin itself inhibits aggregation of washed platelets induced by vWF, thrombin or alboaggregin-A. However, when complexed with the pentameric plasma immunoglobulin Mkappa (IgMkappa), echicetin binds specifically to GPIb and activates platelets. This is caused by P-selectin expression and activation of alpha-IIb/beta-3 as well as tyrosine phosphorylation of several signal transduction molecules, including p53/56(LYN), p64, p72(SYK), p70 to p90, and p120. In vivo, it induces thrombocytopenia when injected into mice, probably accounting of activation of platelets rather than inhibition. In Echis carinatus sochureki (Saw-scaled viper), this protein is Snaclec echicetin subunit alpha.